A 216-amino-acid polypeptide reads, in one-letter code: Protein-L-isoaspartate O-methyltransferase (216 aa).

S61 is an active-site residue.

This sequence belongs to the methyltransferase superfamily. L-isoaspartyl/D-aspartyl protein methyltransferase family.

The protein resides in the cytoplasm. The catalysed reaction is [protein]-L-isoaspartate + S-adenosyl-L-methionine = [protein]-L-isoaspartate alpha-methyl ester + S-adenosyl-L-homocysteine. Functionally, catalyzes the methyl esterification of L-isoaspartyl residues in peptides and proteins that result from spontaneous decomposition of normal L-aspartyl and L-asparaginyl residues. It plays a role in the repair and/or degradation of damaged proteins. The polypeptide is Protein-L-isoaspartate O-methyltransferase (Geobacter metallireducens (strain ATCC 53774 / DSM 7210 / GS-15)).